The sequence spans 142 residues: Small ribosomal subunit protein bS18c (142 aa).

The segment at 1–21 (MDRITGPFRKSKKSFRKPLPP) is disordered.

This sequence belongs to the bacterial ribosomal protein bS18 family. In terms of assembly, part of the 30S ribosomal subunit.

The protein localises to the plastid. The polypeptide is Small ribosomal subunit protein bS18c (Cuscuta gronovii (Common dodder)).